The sequence spans 667 residues: Threonine--tRNA ligase (667 aa).

The TGS domain maps to 1 to 64 (MSEAISLTFP…TDGKIEIVTR (64 aa)). The interval 245-553 (DHRRLGREMD…LIENFAGHMP (309 aa)) is catalytic. Zn(2+) contacts are provided by Cys-347, His-398, and His-530.

It belongs to the class-II aminoacyl-tRNA synthetase family. As to quaternary structure, homodimer. It depends on Zn(2+) as a cofactor.

Its subcellular location is the cytoplasm. The catalysed reaction is tRNA(Thr) + L-threonine + ATP = L-threonyl-tRNA(Thr) + AMP + diphosphate + H(+). Its function is as follows. Catalyzes the attachment of threonine to tRNA(Thr) in a two-step reaction: L-threonine is first activated by ATP to form Thr-AMP and then transferred to the acceptor end of tRNA(Thr). Also edits incorrectly charged L-seryl-tRNA(Thr). This chain is Threonine--tRNA ligase, found in Agrobacterium fabrum (strain C58 / ATCC 33970) (Agrobacterium tumefaciens (strain C58)).